Reading from the N-terminus, the 347-residue chain is NADH-ubiquinone oxidoreductase chain 2 (347 aa).

11 consecutive transmembrane segments (helical) span residues 3–23 (PPIF…VMTS), 25–45 (HWML…PILM), 59–79 (YFLT…INLL), 96–116 (ILMT…FWVP), 122–142 (IPLS…LSVL), 149–169 (INPN…GWGG), 178–198 (ILAY…LYNP), 201–221 (MILN…LFML), 237–257 (MPLI…LPPL), 274–294 (EMII…YFYM), and 325–345 (FLPP…MISI).

The protein belongs to the complex I subunit 2 family. In terms of assembly, core subunit of respiratory chain NADH dehydrogenase (Complex I) which is composed of 45 different subunits. Interacts with TMEM242.

It is found in the mitochondrion inner membrane. It catalyses the reaction a ubiquinone + NADH + 5 H(+)(in) = a ubiquinol + NAD(+) + 4 H(+)(out). In terms of biological role, core subunit of the mitochondrial membrane respiratory chain NADH dehydrogenase (Complex I) which catalyzes electron transfer from NADH through the respiratory chain, using ubiquinone as an electron acceptor. Essential for the catalytic activity and assembly of complex I. The chain is NADH-ubiquinone oxidoreductase chain 2 from Genetta servalina (Servaline genet).